The following is a 155-amino-acid chain: Small ribosomal subunit protein bS16 (155 aa).

The tract at residues 113 to 155 is disordered; sequence ADGAPTGEAIQQKKKKAPKKAEAAEAEAPAEEPAAESADAASE. The span at 136 to 146 shows a compositional bias: acidic residues; it reads AEAEAPAEEPA.

Belongs to the bacterial ribosomal protein bS16 family.

This Mycobacteroides abscessus (strain ATCC 19977 / DSM 44196 / CCUG 20993 / CIP 104536 / JCM 13569 / NCTC 13031 / TMC 1543 / L948) (Mycobacterium abscessus) protein is Small ribosomal subunit protein bS16.